A 255-amino-acid chain; its full sequence is Type III pantothenate kinase (255 aa).

Position 6–13 (aspartate 6–valine 13) interacts with ATP. Substrate-binding positions include tyrosine 100 and glycine 107–arginine 110. The active-site Proton acceptor is the aspartate 109. Position 129 (aspartate 129) interacts with K(+). Threonine 132 contacts ATP. Threonine 184 provides a ligand contact to substrate.

It belongs to the type III pantothenate kinase family. As to quaternary structure, homodimer. The cofactor is NH4(+). It depends on K(+) as a cofactor.

It localises to the cytoplasm. It catalyses the reaction (R)-pantothenate + ATP = (R)-4'-phosphopantothenate + ADP + H(+). It functions in the pathway cofactor biosynthesis; coenzyme A biosynthesis; CoA from (R)-pantothenate: step 1/5. Functionally, catalyzes the phosphorylation of pantothenate (Pan), the first step in CoA biosynthesis. The chain is Type III pantothenate kinase from Ruminiclostridium cellulolyticum (strain ATCC 35319 / DSM 5812 / JCM 6584 / H10) (Clostridium cellulolyticum).